Reading from the N-terminus, the 413-residue chain is Putative glutamate synthase [NADPH] small chain (413 aa).

[4Fe-4S] cluster is bound by residues Cys33, Cys37, Cys43, and Cys47.

As to quaternary structure, aggregate of 4 catalytic active heterodimers, consisting of a large and a small subunit. Requires [4Fe-4S] cluster as cofactor.

The catalysed reaction is 2 L-glutamate + NADP(+) = L-glutamine + 2-oxoglutarate + NADPH + H(+). Its pathway is amino-acid biosynthesis; L-glutamate biosynthesis via GLT pathway; L-glutamate from 2-oxoglutarate and L-glutamine (NADP(+) route): step 1/1. It functions in the pathway energy metabolism; nitrogen metabolism. The polypeptide is Putative glutamate synthase [NADPH] small chain (gltD) (Cereibacter sphaeroides (Rhodobacter sphaeroides)).